Here is a 122-residue protein sequence, read N- to C-terminus: Large ribosomal subunit protein uL14 (122 aa).

This sequence belongs to the universal ribosomal protein uL14 family. In terms of assembly, part of the 50S ribosomal subunit. Forms a cluster with proteins L3 and L19. In the 70S ribosome, L14 and L19 interact and together make contacts with the 16S rRNA in bridges B5 and B8.

In terms of biological role, binds to 23S rRNA. Forms part of two intersubunit bridges in the 70S ribosome. This Idiomarina loihiensis (strain ATCC BAA-735 / DSM 15497 / L2-TR) protein is Large ribosomal subunit protein uL14.